The sequence spans 515 residues: 2,3-bisphosphoglycerate-independent phosphoglycerate mutase (515 aa).

Positions 14 and 64 each coordinate Mn(2+). The active-site Phosphoserine intermediate is the Ser-64. Residues His-125, 155–156 (RD), Arg-187, Arg-193, 263–266 (RADR), and Lys-337 contribute to the substrate site. Residues Asp-404, His-408, Asp-445, His-446, and His-464 each contribute to the Mn(2+) site.

The protein belongs to the BPG-independent phosphoglycerate mutase family. Monomer. Mn(2+) is required as a cofactor.

The enzyme catalyses (2R)-2-phosphoglycerate = (2R)-3-phosphoglycerate. Its pathway is carbohydrate degradation; glycolysis; pyruvate from D-glyceraldehyde 3-phosphate: step 3/5. In terms of biological role, catalyzes the interconversion of 2-phosphoglycerate and 3-phosphoglycerate. This chain is 2,3-bisphosphoglycerate-independent phosphoglycerate mutase, found in Cronobacter sakazakii (strain ATCC BAA-894) (Enterobacter sakazakii).